Consider the following 364-residue polypeptide: 1-acyl-sn-glycerol-3-phosphate acyltransferase epsilon (364 aa).

2 helical membrane passes run 15-35 (LLPSVVLLGTAPTYVLAWGVW) and 61-81 (MVLFFFENYTGVQILLYGDLP). Positions 93–98 (HQSTVD) match the HXXXXD motif motif. A helical membrane pass occupies residues 344-364 (LYVNTWIYGTLLGCLWVTIKA).

It belongs to the 1-acyl-sn-glycerol-3-phosphate acyltransferase family. In terms of tissue distribution, widely expressed.

Its subcellular location is the endoplasmic reticulum membrane. It localises to the nucleus envelope. It is found in the mitochondrion. It carries out the reaction a 1-acyl-sn-glycero-3-phosphate + an acyl-CoA = a 1,2-diacyl-sn-glycero-3-phosphate + CoA. It catalyses the reaction 1-(9Z-octadecenoyl)-sn-glycero-3-phosphate + tetradecanoyl-CoA = 1-(9Z)-octadecenoyl-2-tetradecanoyl-sn-glycero-3-phosphate + CoA. The enzyme catalyses pentadecanoyl-CoA + 1-(9Z-octadecenoyl)-sn-glycero-3-phosphate = 1-(9Z)-octadecenoyl-2-pentadecanoyl-sn-glycero-3-phosphate + CoA. The catalysed reaction is 1-(9Z-octadecenoyl)-sn-glycero-3-phosphate + octadecanoyl-CoA = 1-(9Z-octadecenoyl)-2-octadecanoyl-sn-glycero-3-phosphate + CoA. It carries out the reaction nonadecanoyl-CoA + 1-(9Z-octadecenoyl)-sn-glycero-3-phosphate = 1-(9Z)-octadecenoyl-2-nonadecanoyl-sn-glycero-3-phosphate + CoA. It catalyses the reaction 1-(9Z-octadecenoyl)-sn-glycero-3-phosphoethanolamine + (9Z)-octadecenoyl-CoA = 1,2-di-(9Z-octadecenoyl)-sn-glycero-3-phosphoethanolamine + CoA. The enzyme catalyses 1-(9Z-octadecenoyl)-sn-glycero-3-phosphocholine + (9Z)-octadecenoyl-CoA = 1,2-di-(9Z-octadecenoyl)-sn-glycero-3-phosphocholine + CoA. The catalysed reaction is 1-(9Z-octadecenoyl)-sn-glycero-3-phospho-(1D-myo-inositol) + (5Z,8Z,11Z,14Z)-eicosatetraenoyl-CoA = 1-(9Z-octadecenoyl)-2-(5Z,8Z,11Z,14Z-eicosatetraenoyl)-sn-glycero-3-phospho-1D-myo-inositol + CoA. It carries out the reaction 1-(9Z-octadecenoyl)-sn-glycero-3-phospho-L-serine + (9Z)-octadecenoyl-CoA = 1,2-di-(9Z)-octadecenoyl-sn-glycero-3-phospho-L-serine + CoA. It catalyses the reaction 1-(9Z-octadecenoyl)-sn-glycero-3-phospho-L-serine + (5Z,8Z,11Z,14Z)-eicosatetraenoyl-CoA = 1-(9Z-octadecenoyl)-2-(5Z,8Z,11Z,14Z-eicosatetraenoyl)-sn-glycero-3-phospho-L-serine + CoA. The enzyme catalyses 1-hexadecanoyl-sn-glycero-3-phosphate + (9Z)-octadecenoyl-CoA = 1-hexadecanoyl-2-(9Z-octadecenoyl)-sn-glycero-3-phosphate + CoA. The catalysed reaction is 1-heptadecanoyl-sn-glycero-3-phosphate + (9Z)-octadecenoyl-CoA = 1-heptadecanoyl-2-(9Z)-octadecenoyl-sn-glycero-3-phosphate + CoA. It carries out the reaction 1-(5Z,8Z,11Z,14Z-eicosatetraenoyl)-sn-glycero-3-phosphate + (9Z)-octadecenoyl-CoA = 1-(5Z,8Z,11Z,14Z)-eicosatetraenoyl-2-(9Z)-octadecenoyl-sn-glycero-3-phosphate + CoA. It catalyses the reaction 1-octadecanoyl-sn-glycero-3-phosphate + (9Z)-octadecenoyl-CoA = 1-octadecanoyl-2-(9Z-octadecenoyl)-sn-glycero-3-phosphate + CoA. The enzyme catalyses 1-(9Z-octadecenoyl)-sn-glycero-3-phosphate + (5Z,8Z,11Z,14Z)-eicosatetraenoyl-CoA = 1-(9Z)-octadecenoyl-2-(5Z,8Z,11Z,14Z)-eicosatetraenoyl-sn-glycero-3-phosphate + CoA. The catalysed reaction is heptadecanoyl-CoA + 1-(9Z-octadecenoyl)-sn-glycero-3-phosphate = 1-(9Z)-octadecenoyl-2-heptadecanoyl-sn-glycero-3-phosphate + CoA. It carries out the reaction 1-(9Z-octadecenoyl)-sn-glycero-3-phosphocholine + (5Z,8Z,11Z,14Z)-eicosatetraenoyl-CoA = 1-(9Z)-octadecenoyl-2-(5Z,8Z,11Z,14Z)-icosatetraenoyl-sn-glycero-3-phosphocholine + CoA. It catalyses the reaction 1-(9Z-octadecenoyl)-sn-glycero-3-phosphate + (9Z)-octadecenoyl-CoA = 1,2-di-(9Z-octadecenoyl)-sn-glycero-3-phosphate + CoA. The enzyme catalyses 1-(9Z-octadecenoyl)-sn-glycero-3-phosphate + hexadecanoyl-CoA = 1-hexadecanoyl-2-(9Z-octadecenoyl)-sn-glycero-3-phosphate + CoA. The protein operates within phospholipid metabolism; CDP-diacylglycerol biosynthesis; CDP-diacylglycerol from sn-glycerol 3-phosphate: step 2/3. In terms of biological role, converts 1-acyl-sn-glycerol-3-phosphate (lysophosphatidic acid or LPA) into 1,2-diacyl-sn-glycerol-3-phosphate (phosphatidic acid or PA) by incorporating an acyl moiety at the sn-2 position of the glycerol backbone. Acts on LPA containing saturated or unsaturated fatty acids C15:0-C20:4 at the sn-1 position using C18:1-CoA as the acyl donor. Also acts on lysophosphatidylethanolamine using oleoyl-CoA, but not arachidonoyl-CoA, and lysophosphatidylinositol using arachidonoyl-CoA, but not oleoyl-CoA. Activity toward lysophosphatidylglycerol not detectable. The protein is 1-acyl-sn-glycerol-3-phosphate acyltransferase epsilon (AGPAT5) of Homo sapiens (Human).